Reading from the N-terminus, the 370-residue chain is MHLESIVLRNFRNYENLELEFSPSVNVFLGENAQGKTNLLEAVLMLALAKSHRTTNDKDFIMWEKEEAKMEGRVVKRGQTVPLELAITQKGKRAKVNHLEQKKLSQYVGNLNVVIFAPEDLSLVKGAPGVRRRFLNMEIGQMQPIYLHNLSEYQRILQQRNQYLKMLQMKRKVDPMLLDILTEQFADVAINLTKRRADFIQKLEAYAAPIHHQISRGLETLKIEYKASVTLNGDDPEVWKADLLQKMESIKQREIDRGVTLIGPHRDDSLFYINGQNVQDFGSQGQQRTTALSVKLAEIDLIHEETGEYPVLLLDDVLSELDDYRQSHLLGAIEGKVQTFVTTTSTSGIDHNTLRQATTFYVEKGTVKKS.

Residue glycine 30–threonine 37 coordinates ATP.

The protein belongs to the RecF family.

The protein resides in the cytoplasm. The RecF protein is involved in DNA metabolism; it is required for DNA replication and normal SOS inducibility. RecF binds preferentially to single-stranded, linear DNA. It also seems to bind ATP. The protein is DNA replication and repair protein RecF of Listeria innocua serovar 6a (strain ATCC BAA-680 / CLIP 11262).